A 450-amino-acid chain; its full sequence is tRNA modification GTPase MnmE (450 aa).

Residues R23, E80, and R123 each contribute to the (6S)-5-formyl-5,6,7,8-tetrahydrofolate site. The region spanning 219 to 372 (GLHVVLAGKP…LRQRLLQLAG (154 aa)) is the TrmE-type G domain. N229 serves as a coordination point for K(+). Residues 229–234 (NVGKSS), 248–254 (TPIAGTT), 273–276 (DTAG), and 353–355 (SAR) contribute to the GTP site. Residue S233 coordinates Mg(2+). Positions 248, 250, and 253 each coordinate K(+). T254 lines the Mg(2+) pocket. K450 contributes to the (6S)-5-formyl-5,6,7,8-tetrahydrofolate binding site.

The protein belongs to the TRAFAC class TrmE-Era-EngA-EngB-Septin-like GTPase superfamily. TrmE GTPase family. In terms of assembly, homodimer. Heterotetramer of two MnmE and two MnmG subunits. K(+) serves as cofactor.

It localises to the cytoplasm. In terms of biological role, exhibits a very high intrinsic GTPase hydrolysis rate. Involved in the addition of a carboxymethylaminomethyl (cmnm) group at the wobble position (U34) of certain tRNAs, forming tRNA-cmnm(5)s(2)U34. In Bordetella parapertussis (strain 12822 / ATCC BAA-587 / NCTC 13253), this protein is tRNA modification GTPase MnmE.